A 103-amino-acid polypeptide reads, in one-letter code: Histone H4 (103 aa).

The span at 1–14 shows a compositional bias: gly residues; sequence MTGRGKGGKGLGKG. The interval 1-20 is disordered; that stretch reads MTGRGKGGKGLGKGGAKRHR. N6-acetyl-N6-methyllysine; alternate occurs at positions 6 and 13. The DNA-binding element occupies 17 to 21; sequence KRHRK.

It belongs to the histone H4 family. The nucleosome is a histone octamer containing two molecules each of H2A, H2B, H3 and H4 assembled in one H3-H4 heterotetramer and two H2A-H2B heterodimers. The octamer wraps approximately 147 bp of DNA.

The protein resides in the nucleus. It is found in the chromosome. Functionally, core component of nucleosome. Nucleosomes wrap and compact DNA into chromatin, limiting DNA accessibility to the cellular machineries which require DNA as a template. Histones thereby play a central role in transcription regulation, DNA repair, DNA replication and chromosomal stability. DNA accessibility is regulated via a complex set of post-translational modifications of histones, also called histone code, and nucleosome remodeling. This Trichogramma cacaeciae (Moth egg parasite) protein is Histone H4.